Reading from the N-terminus, the 491-residue chain is Glutamine synthetase (491 aa).

In terms of domain architecture, GS beta-grasp spans 23-111 (NNVRQVLCAF…MFGNVYEAWG (89 aa)). One can recognise a GS catalytic domain in the interval 119–491 (PRGYVAKRYE…PWEFMKYFDI (373 aa)). Positions 143 and 145 each coordinate Mg(2+). Glutamate 225 serves as a coordination point for ATP. The Mg(2+) site is built by glutamate 230 and glutamate 238. L-glutamate contacts are provided by residues 282–283 (NA) and alanine 283. Histidine 287 is a binding site for Mg(2+). Residues 289 to 291 (HQS) and serine 291 each bind ATP. L-glutamate-binding residues include arginine 344, glutamate 350, and arginine 362. ATP is bound by residues arginine 362 and arginine 367. Glutamate 381 lines the Mg(2+) pocket. Position 383 (arginine 383) interacts with L-glutamate.

This sequence belongs to the glutamine synthetase family. Oligomer of 12 subunits arranged in the form of two hexagons. Mg(2+) is required as a cofactor.

The protein localises to the cytoplasm. It carries out the reaction L-glutamate + NH4(+) + ATP = L-glutamine + ADP + phosphate + H(+). Probably involved in nitrogen metabolism via ammonium assimilation. Catalyzes the ATP-dependent biosynthesis of glutamine from glutamate and ammonia. Beta-glutamate is a much poorer substrate than alpha-glutamate. In Archaeoglobus fulgidus (strain ATCC 49558 / DSM 4304 / JCM 9628 / NBRC 100126 / VC-16), this protein is Glutamine synthetase.